Reading from the N-terminus, the 323-residue chain is Sphingolipid delta(4)-desaturase/C4-monooxygenase DES2 (323 aa).

Glycine 2 carries N-myristoyl glycine lipidation. Transmembrane regions (helical) follow at residues 45-65 (WAVLVLVLVQMLACWLVRGLA) and 68-88 (WLLFWAYAFGGCVNHSLTLAI). The Histidine box-1 signature appears at 89–93 (HDISH). Residues 95–99 (AAFGT) are required for C4-hydroxylase activity. The Histidine box-2 signature appears at 128–132 (HVDHH). A helical membrane pass occupies residues 210–231 (VYLLASSFLGLGLHPISGHFVA). The short motif at 259–263 (HVEHH) is the Histidine box-3 element.

The protein belongs to the fatty acid desaturase type 1 family. DEGS subfamily. As to expression, highly expressed in skin, intestine and kidney.

Its subcellular location is the endoplasmic reticulum membrane. It catalyses the reaction a dihydroceramide + 2 Fe(II)-[cytochrome b5] + O2 + 2 H(+) = a phytoceramide + 2 Fe(III)-[cytochrome b5] + H2O. The enzyme catalyses an N-acylsphinganine + 2 Fe(II)-[cytochrome b5] + O2 + 2 H(+) = an N-acylsphing-4-enine + 2 Fe(III)-[cytochrome b5] + 2 H2O. The catalysed reaction is N-octanoylsphinganine + 2 Fe(II)-[cytochrome b5] + O2 + 2 H(+) = N-octanoyl-4-hydroxysphinganine + 2 Fe(III)-[cytochrome b5] + H2O. It carries out the reaction an N-acylsphinganine + 2 Fe(II)-[cytochrome b5] + O2 + 2 H(+) = an N-acyl-(4R)-4-hydroxysphinganine + 2 Fe(III)-[cytochrome b5] + H2O. Its pathway is membrane lipid metabolism; sphingolipid biosynthesis. Its function is as follows. Bifunctional enzyme which acts both as a sphingolipid delta(4)-desaturase and a sphingolipid C4-monooxygenase. The protein is Sphingolipid delta(4)-desaturase/C4-monooxygenase DES2 of Homo sapiens (Human).